The sequence spans 507 residues: Heat shock 70 kDa protein 14-B (507 aa).

This sequence belongs to the heat shock protein 70 family. As to quaternary structure, component of ribosome-associated complex (RAC).

It localises to the cytoplasm. The protein localises to the cytosol. Functionally, component of the ribosome-associated complex (RAC), a complex involved in folding or maintaining nascent polypeptides in a folding-competent state. This is Heat shock 70 kDa protein 14-B (hspa14-b) from Xenopus laevis (African clawed frog).